Here is a 64-residue protein sequence, read N- to C-terminus: Large ribosomal subunit protein uL29 (64 aa).

This sequence belongs to the universal ribosomal protein uL29 family.

The polypeptide is Large ribosomal subunit protein uL29 (Cupriavidus metallidurans (strain ATCC 43123 / DSM 2839 / NBRC 102507 / CH34) (Ralstonia metallidurans)).